The primary structure comprises 1939 residues: Myosin-4 (1939 aa).

In terms of domain architecture, Myosin N-terminal SH3-like spans 33-82 (DAKSSVFVVDAKESYVKATVQSREGGKVTAKTEGGATVTVKEDQVFSMNP). Position 36 is a phosphoserine (Ser-36). Phosphothreonine occurs at positions 64 and 69. Phosphoserine is present on Ser-79. Residues 86–782 (DKIEDMAMMT…LLGTLEEMRD (697 aa)) form the Myosin motor domain. Residue Lys-130 is modified to N6,N6,N6-trimethyllysine. An ATP-binding site is contributed by 179–186 (GESGAGKT). Position 389 is a phosphotyrosine (Tyr-389). Thr-391 is modified (phosphothreonine). Ser-392 is subject to Phosphoserine. A Phosphothreonine modification is found at Thr-419. Tyr-424 is subject to Phosphotyrosine. Residue Ser-625 is modified to Phosphoserine. The segment at 659–681 (LNKLMTNLKSTHPHFVRCLIPNE) is actin-binding. At His-757 the chain carries Pros-methylhistidine. The segment at 761 to 775 (KFGHTKVFFKAGLLG) is actin-binding. Residue Thr-776 is modified to Phosphothreonine. Residues 785 to 814 (LAQLITRTQAVCRGYLMRVEFRKMMERRES) form the IQ domain. A coiled-coil region spans residues 843-1939 (LLKSAETEKE…EVHTKVISEE (1097 aa)). Phosphoserine is present on residues Ser-1092 and Ser-1096. Disordered regions lie at residues 1128-1147 (AERASRAKAEKQRSDLSREL) and 1153-1172 (RLEEAGGATSAQIEMNKKRE). 2 positions are modified to phosphoserine: Ser-1162 and Ser-1237. A Phosphothreonine modification is found at Thr-1241. A Phosphoserine modification is found at Ser-1243. Thr-1255 carries the phosphothreonine modification. Residue Ser-1261 is modified to Phosphoserine. Thr-1265 is subject to Phosphothreonine. Ser-1278 is subject to Phosphoserine. A Phosphothreonine modification is found at Thr-1286. Phosphoserine occurs at positions 1288, 1292, 1303, 1306, and 1413. Tyr-1464 bears the Phosphotyrosine mark. Residue Thr-1467 is modified to Phosphothreonine. A Phosphoserine modification is found at Ser-1474. Tyr-1492 is modified (phosphotyrosine). Position 1495 is a phosphoserine (Ser-1495). Thr-1501 carries the phosphothreonine modification. The residue at position 1514 (Ser-1514) is a Phosphoserine. The residue at position 1517 (Thr-1517) is a Phosphothreonine. 8 positions are modified to phosphoserine: Ser-1542, Ser-1547, Ser-1554, Ser-1574, Ser-1600, Ser-1603, Ser-1714, and Ser-1726. Thr-1730 and Thr-1736 each carry phosphothreonine. Ser-1739 carries the post-translational modification Phosphoserine.

It belongs to the TRAFAC class myosin-kinesin ATPase superfamily. Myosin family. In terms of assembly, muscle myosin is a hexameric protein that consists of 2 heavy chain subunits (MHC), 2 alkali light chain subunits (MLC) and 2 regulatory light chain subunits (MLC-2).

The protein resides in the cytoplasm. It is found in the myofibril. Muscle contraction. In Rattus norvegicus (Rat), this protein is Myosin-4.